The sequence spans 219 residues: Thiopurine S-methyltransferase (219 aa).

The S-adenosyl-L-methionine site is built by tryptophan 10, leucine 45, glutamate 66, and arginine 123.

This sequence belongs to the class I-like SAM-binding methyltransferase superfamily. TPMT family.

It localises to the cytoplasm. It carries out the reaction S-adenosyl-L-methionine + a thiopurine = S-adenosyl-L-homocysteine + a thiopurine S-methylether.. The protein is Thiopurine S-methyltransferase of Shewanella frigidimarina (strain NCIMB 400).